Consider the following 132-residue polypeptide: D-ribose pyranase (132 aa).

Histidine 20 acts as the Proton donor in catalysis. Residues aspartate 28, histidine 99, and 121–123 (YSN) contribute to the substrate site.

It belongs to the RbsD / FucU family. RbsD subfamily. Homodecamer.

The protein localises to the cytoplasm. The catalysed reaction is beta-D-ribopyranose = beta-D-ribofuranose. Its pathway is carbohydrate metabolism; D-ribose degradation; D-ribose 5-phosphate from beta-D-ribopyranose: step 1/2. In terms of biological role, catalyzes the interconversion of beta-pyran and beta-furan forms of D-ribose. This Lactococcus lactis subsp. cremoris (strain SK11) protein is D-ribose pyranase.